A 501-amino-acid polypeptide reads, in one-letter code: Probable cytochrome P450 28d2 (501 aa).

C446 is a binding site for heme.

This sequence belongs to the cytochrome P450 family. Heme is required as a cofactor.

It is found in the endoplasmic reticulum membrane. The protein localises to the microsome membrane. May be involved in the metabolism of insect hormones and in the breakdown of synthetic insecticides. The sequence is that of Probable cytochrome P450 28d2 (Cyp28d2) from Drosophila melanogaster (Fruit fly).